A 251-amino-acid chain; its full sequence is 5'-nucleotidase SurE (251 aa).

A divalent metal cation is bound by residues D8, D9, S39, and N95.

Belongs to the SurE nucleotidase family. Requires a divalent metal cation as cofactor.

The protein resides in the cytoplasm. It carries out the reaction a ribonucleoside 5'-phosphate + H2O = a ribonucleoside + phosphate. Nucleotidase that shows phosphatase activity on nucleoside 5'-monophosphates. This chain is 5'-nucleotidase SurE, found in Ralstonia pickettii (strain 12J).